The sequence spans 37 residues: Large ribosomal subunit protein bL36 (37 aa).

Belongs to the bacterial ribosomal protein bL36 family.

This Staphylococcus carnosus (strain TM300) protein is Large ribosomal subunit protein bL36.